The chain runs to 189 residues: Transcription factor FapR (189 aa).

It belongs to the FapR family.

Transcriptional factor involved in regulation of membrane lipid biosynthesis by repressing genes involved in fatty acid and phospholipid metabolism. In Listeria welshimeri serovar 6b (strain ATCC 35897 / DSM 20650 / CCUG 15529 / CIP 8149 / NCTC 11857 / SLCC 5334 / V8), this protein is Transcription factor FapR.